We begin with the raw amino-acid sequence, 107 residues long: Polyketide synthase CurG (107 aa).

It participates in antibiotic biosynthesis; curamycin biosynthesis. This chain is Polyketide synthase CurG (curG), found in Streptomyces cyaneus (Streptomyces curacoi).